We begin with the raw amino-acid sequence, 405 residues long: S-adenosylmethionine synthase (405 aa).

141-146 (GQGSVD) provides a ligand contact to ATP.

This sequence belongs to the AdoMet synthase 2 family. Requires Mg(2+) as cofactor.

It carries out the reaction L-methionine + ATP + H2O = S-adenosyl-L-methionine + phosphate + diphosphate. It functions in the pathway amino-acid biosynthesis; S-adenosyl-L-methionine biosynthesis; S-adenosyl-L-methionine from L-methionine: step 1/1. In terms of biological role, catalyzes the formation of S-adenosylmethionine from methionine and ATP. The protein is S-adenosylmethionine synthase of Methanococcus maripaludis (strain C6 / ATCC BAA-1332).